The primary structure comprises 732 residues: MSYYYVPISSPYQIESTEYIDDFVTMLFDGSIEFINDEQRKQLKLPENYIQSVRENISLYSDRVPLYDIGSNHIFLIHRDNVYPRIYFENYRFIDQNFYNDLKNIKKPTSIDKNNLRILSHYDLSKLYTTYMKIFYDSFVVNSYITHCQRPSFFSGMEHIRPYYTINELNYLAYDWNLTNKLSLTTSEINSFCKKISQYDIPAETLLDHQMYIYDSKAIGLVKHYSLFGSYYMNYYLRKNKCCLPGEINDDMTIVRNLYLENQIEIMIRLIKNAPGFTKSHTVYRFVETDDYLKHLNIGDIYQDSSFMSTTRNPFYYKENYAFGYILIKITIPKKIKGTGLCIEAYSNFPNEEEIVLPPTTRYRLVNYMENQELENFQNVFGIVAKKKYEFEWVGNDYIDKADFEIKIDIPNSIIPKKNFVDLKELINDDNIKNLSISDRLKYFRDTYSSVNNQFVCQIGNYEYIFNFEAYNSTSVYKPFFYYEINDGIMVTTSNPKYGNINILMELGPEIHVNYYFRYSVTDPSIVVDLNRSEWIEWLSVFSYVIGSRNVVIHSNYVLQYDKSDTIKQKQMKTRYTFSQNIYLYLKNGTKFFEFDEVVPNFDYARLDYLFGYNVFDVIKPTDRDELYRITQSSGKSNMGDLYIYIIENHPKLIRSIEDKMDIVYNYNDNINPFKNISYNLDAWRYLYDHYYINHIPSEKEFTIKKGSFKKLIGSKKIVKFQNRLRTYLMSQ.

One can recognise a TR mART core domain in the interval 163 to 390 (YYTINELNYL…FGIVAKKKYE (228 aa)). Active-site residues include arginine 285, serine 309, and glutamate 354.

This is an uncharacterized protein from Acanthamoeba polyphaga mimivirus (APMV).